Consider the following 349-residue polypeptide: Heat-inducible transcription repressor HrcA (349 aa).

The protein belongs to the HrcA family.

Negative regulator of class I heat shock genes (grpE-dnaK-dnaJ and groELS operons). Prevents heat-shock induction of these operons. In Lactobacillus acidophilus (strain ATCC 700396 / NCK56 / N2 / NCFM), this protein is Heat-inducible transcription repressor HrcA.